The chain runs to 363 residues: Histidinol-phosphate aminotransferase (363 aa).

Lysine 218 bears the N6-(pyridoxal phosphate)lysine mark.

It belongs to the class-II pyridoxal-phosphate-dependent aminotransferase family. Histidinol-phosphate aminotransferase subfamily. As to quaternary structure, homodimer. Requires pyridoxal 5'-phosphate as cofactor.

It carries out the reaction L-histidinol phosphate + 2-oxoglutarate = 3-(imidazol-4-yl)-2-oxopropyl phosphate + L-glutamate. It participates in amino-acid biosynthesis; L-histidine biosynthesis; L-histidine from 5-phospho-alpha-D-ribose 1-diphosphate: step 7/9. The sequence is that of Histidinol-phosphate aminotransferase from Xanthomonas euvesicatoria pv. vesicatoria (strain 85-10) (Xanthomonas campestris pv. vesicatoria).